Consider the following 261-residue polypeptide: 2,3-dihydro-2,3-dihydroxybenzoate dehydrogenase (261 aa).

12-36 lines the NAD(+) pocket; it reads FITGAAQGIGEAVARTLASQGAHIA. Residue Ser144 coordinates substrate. Tyr157 acts as the Proton acceptor in catalysis.

The protein belongs to the short-chain dehydrogenases/reductases (SDR) family.

It localises to the cytoplasm. It catalyses the reaction (2S,3S)-2,3-dihydroxy-2,3-dihydrobenzoate + NAD(+) = 2,3-dihydroxybenzoate + NADH + H(+). It participates in siderophore biosynthesis; bacillibactin biosynthesis. The chain is 2,3-dihydro-2,3-dihydroxybenzoate dehydrogenase (dhbA) from Bacillus subtilis (strain 168).